The sequence spans 179 residues: Stathmin-2 (179 aa).

Positions 1–26 (MAKTAMAYKEKMKELSMLSLICSCFY) are membrane attachment. Residue Ser-16 is modified to Phosphoserine. 2 S-palmitoyl cysteine lipidation sites follow: Cys-22 and Cys-24. The SLD domain occupies 38-179 (DDMEVKQINK…NKELQVELSG (142 aa)). Positions 39–96 (DMEVKQINKRASGQAFELILKPPSPISEAPRTLASPKKKDLSLEEIQKKLEAAEERRK) are regulatory/phosphorylation domain. Residues Ser-50, Ser-62, Ser-73, and Ser-97 each carry the phosphoserine modification. Residues 75-179 (KKKDLSLEEI…NKELQVELSG (105 aa)) adopt a coiled-coil conformation.

The protein belongs to the stathmin family. Interacts with MAPK8. Interacts with ITM2C. Interacts with KIFBP. Interacts (via the N-terminal region) with CIB1 (via C-terminal region); the interaction is direct, occurs in a calcium-dependent manner and attenuates the neurite outgrowth inhibition of STMN2. Post-translationally, sumoylated. In terms of processing, phosphorylated mostly by MAPK8, but also by MAPK9 and MAPK10 in the developing brain cortex. N-terminal palmitoylation promotes specific anchoring to the cytosolic leaflet of Golgi membranes and subsequent vesicular trafficking along dendrites and axons. Neuronal Stathmins are substrates for palmitoyltransferases ZDHHC3, ZDHHC7 and ZDHHC15. In terms of tissue distribution, neuron specific.

The protein resides in the cytoplasm. The protein localises to the perinuclear region. It localises to the cell projection. Its subcellular location is the growth cone. It is found in the membrane. The protein resides in the axon. The protein localises to the golgi apparatus. It localises to the endosome. Its subcellular location is the lamellipodium. Regulator of microtubule stability. When phosphorylated by MAPK8, stabilizes microtubules and consequently controls neurite length in cortical neurons. In the developing brain, negatively regulates the rate of exit from multipolar stage and retards radial migration from the ventricular zone. This chain is Stathmin-2 (STMN2), found in Homo sapiens (Human).